The following is a 428-amino-acid chain: UPF0597 protein PBPRB0240 (428 aa).

It belongs to the UPF0597 family.

This chain is UPF0597 protein PBPRB0240, found in Photobacterium profundum (strain SS9).